Reading from the N-terminus, the 221-residue chain is tRNA (guanine-N(7)-)-methyltransferase (221 aa).

The S-adenosyl-L-methionine site is built by Glu-46, Asp-71, and Asp-120. The active site involves Asp-120. Asp-156 is a substrate binding site.

This sequence belongs to the class I-like SAM-binding methyltransferase superfamily. TrmB family.

It carries out the reaction guanosine(46) in tRNA + S-adenosyl-L-methionine = N(7)-methylguanosine(46) in tRNA + S-adenosyl-L-homocysteine. The protein operates within tRNA modification; N(7)-methylguanine-tRNA biosynthesis. In terms of biological role, catalyzes the formation of N(7)-methylguanine at position 46 (m7G46) in tRNA. In Cytophaga hutchinsonii (strain ATCC 33406 / DSM 1761 / CIP 103989 / NBRC 15051 / NCIMB 9469 / D465), this protein is tRNA (guanine-N(7)-)-methyltransferase.